The sequence spans 552 residues: Urocanate hydratase (552 aa).

Residues 49-50 (GG), glutamine 127, 173-175 (GMG), aspartate 193, 239-240 (NA), 260-264 (QTSAH), 270-271 (YI), and tyrosine 319 contribute to the NAD(+) site. Cysteine 407 is a catalytic residue. Glycine 489 provides a ligand contact to NAD(+).

This sequence belongs to the urocanase family. Requires NAD(+) as cofactor.

The protein resides in the cytoplasm. It catalyses the reaction 4-imidazolone-5-propanoate = trans-urocanate + H2O. The protein operates within amino-acid degradation; L-histidine degradation into L-glutamate; N-formimidoyl-L-glutamate from L-histidine: step 2/3. Functionally, catalyzes the conversion of urocanate to 4-imidazolone-5-propionate. The chain is Urocanate hydratase from Bacillus cereus (strain B4264).